The sequence spans 518 residues: FAD-dependent monooxygenase tpcD (518 aa).

The signal sequence occupies residues 1-22; sequence MQLLGTLSWLYAIQASIGSSKA. N61 is a glycosylation site (N-linked (GlcNAc...) asparagine). An FAD-binding PCMH-type domain is found at 75–246; the sequence is QSAQPACLVH…TRFDLDVFQQ (172 aa). Pros-8alpha-FAD histidine is present on H112. Residues N163, N208, N216, and N346 are each glycosylated (N-linked (GlcNAc...) asparagine).

Belongs to the oxygen-dependent FAD-linked oxidoreductase family. The cofactor is FAD.

It participates in secondary metabolite biosynthesis; terpenoid biosynthesis. Functionally, FAD-dependent monooxygenase; part of the gene cluster that mediates the biosynthesis of terpestacin. The bifunctional terpene synthase tpcA converts isopentenyl diphosphate (IPP) and dimethylallyl diphosphate (DMAPP) into the sesterterpene preterpestacin I. The C-terminal prenyltransferase (PT) domain of tpcA catalyzes formation of GFPP, whereas the N-terminal terpene cyclase (TC) domain catalyzes the cyclization of GFPP into preterpestacin I. The cytochrome P450 monooxygenase tpcB then hydroxylates preterpestacin I to yield 24-hydroxypreterpstacin I (renamed as preterpestacin II) whereas the cytochrome P450 monooxygenase tpcC further hydroxylates preterpestacin II to yield 16,17-dihydroxypreterpestacin II (renamed as preterpestacin III). Finally, the FAD-dependent monooxygenase tpcD converts preterpestacin III into terpestacin. This is FAD-dependent monooxygenase tpcD from Cochliobolus heterostrophus (strain C5 / ATCC 48332 / race O) (Southern corn leaf blight fungus).